A 580-amino-acid polypeptide reads, in one-letter code: MASSSWAFFKVFNPQIAPKSISHIGQSDLMQLTHKKQLPTFQRRGIAEDSLLPSSTTPIKPMHVETKHTRTMGDIFVQHSQKLELFRNVLRNAAELDALEGLNMIDAVQRLGIDYHFQREIDEILHKQMGIVSACDDLYEVALRFRLLRQHGYFVPEDVFNNFKDSKGTFKQVLGEDIKGLMSLYEASQLGTEGEDTLVEAEKFSGHLLKTSLSHLDRHRARIVGNTLRNPHRKSLASFMARNFFVTSQATNSWLNLLKEVAKTDFNMVRSVHQKEIVQISKWWKELGLVKELKFARDQPLKWYTWSMAGLTDPKLSEERVELTKPISFVYLIDDIFDVYGTLDDLILFTEAVNRWEITAIDHLPDYMKICFKALYDMTNEFSCKVYQKHGWNPLRSLKISWASLCNAFLVEAKWFASGQLPKSEEYLKNGIVSSGVNVGLVHMFFLLGQNITRKSVELLNETPAMISSSAAILRLWDDLGSAKDENQDGNDGSYVRCYLEEHEGCSIEEAREKTINMISDEWKKLNRELLSPNPFPATFTSASLNLARMIPLMYSYDGNQSLPSLKEYMKLMLYETVSM.

The transit peptide at 1-31 directs the protein to the chloroplast; that stretch reads MASSSWAFFKVFNPQIAPKSISHIGQSDLMQ. Residues D334, D338, D478, S482, and E486 each coordinate Mg(2+). Positions 334–338 match the DDXXD motif motif; that stretch reads DDIFD.

Belongs to the terpene synthase family. Tpsg subfamily. It depends on Mg(2+) as a cofactor. Mn(2+) serves as cofactor.

It localises to the plastid. The protein localises to the chloroplast. The catalysed reaction is (2E,6E)-farnesyl diphosphate + H2O = (3S,6E)-nerolidol + diphosphate. Its pathway is secondary metabolite biosynthesis; terpenoid biosynthesis. Involved in monoterpene (C10) and sesquiterpene (C15) biosynthesis. Converts geranyl diphosphate (GPP) into S-linalool and farnesyl diphosphate (FPP) into (3S)-E-nerolidol. Probably not expressed in wild strawberry species. This is (3S,6E)-nerolidol synthase 1, chloroplastic from Fragaria vesca (Woodland strawberry).